An 814-amino-acid polypeptide reads, in one-letter code: MEDGFSSYSSLYDTSSLLQFCNDDSASAASSMEISDRIASLEQRVQMQEDDIQLLKSALADVVRRLNITEEQQAVLNRKGPTKARPLGQTLPLRTTVNNGTVLPKKPSASLPSPSGSRKEMVVPVTKSINRTSSSERVSPGGRRESSGDSKGSRNRTGSTSSSSSGKKNSESKPKEPTFSPEEGYVKMFLRGRPVTMYMPKDQVDSYSLEAKAELPTKRLKLEWVYGYRGRDCRNNLYLLPTGETVYFIASVVVLYNVEEQLQRHYAGHNDDVKCLAVHPDRITIATGQVAGTSKDGKQLPPHVRIWDSVTLNTLHVIGIGFFDRAVTCIAFSKSNGGSHLCAVDDSNDHVLSVWDWQREERLADVKCSNEAVFAADFHPTDTNIIVTCGKSHLYFWTLEGNSLNKKQGLFEKQEKPKFVLCVTFSENGDTITGDSSGNILVWGKGTNRISYAVQGAHEGGIFALCMLRDGTLVSGGGKDRRLISWNGNYQKLHKAEIPEQFGPIRTVAEGKGNVILIGTTRNFVLQGTLTGDFTPITQGHTDELWGLAIHASKPQFLTCGHDKHATLWDAVGHRPVWDKIIEDPAQSSGFHPSGSVVAVGTLTGRWFVFDTETKDLVTVHTDGNEQLSVMRYSPDGNFLAIGSHDNCIYIYGVSDNGRKYTRVGKCSGHSSFITHLDWSVNSQFLVSNSGDYEILYWVPSACKQVVSVETTRDIEWATYTCTLGFHVFGVWPEGSDGTDINAVCRAHEKKLLSTGDDFGKVHLFSYPCSQFRAPSHIYSGHSSHVTNVDFLCEDSHLISTGGKDTSIMQWRVI.

The stretch at 31–72 (SMEISDRIASLEQRVQMQEDDIQLLKSALADVVRRLNITEEQ) forms a coiled coil. The interval 77 to 185 (NRKGPTKARP…EPTFSPEEGY (109 aa)) is disordered. A compositionally biased stretch (polar residues) spans 92–101 (PLRTTVNNGT). Low complexity predominate over residues 103 to 115 (LPKKPSASLPSPS). A Phosphoserine modification is found at serine 113. Polar residues predominate over residues 127-137 (KSINRTSSSER). Residues 142–152 (GRRESSGDSKG) are compositionally biased toward basic and acidic residues. Over residues 155–167 (NRTGSTSSSSSGK) the composition is skewed to low complexity. The tract at residues 175-814 (KEPTFSPEEG…DTSIMQWRVI (640 aa)) is tandem atypical propeller in EMLs. 12 WD repeats span residues 260–309 (EQLQ…IWDS), 314–357 (TLHV…VWDW), 362–399 (RLADVKCSNEAVFAADFHPTDTNIIVTCGKSHLYFWTL), 408–445 (QGLFEKQEKPKFVLCVTFSENGDTITGDSSGNILVWGK), 449–488 (RISYAVQGAHEGGIFALCMLRDGTLVSGGGKDRRLISWNG), 492–529 (KLHKAEIPEQFGPIRTVAEGKGNVILIGTTRNFVLQGT), 534–571 (FTPITQGHTDELWGLAIHASKPQFLTCGHDKHATLWDA), 577–612 (VWDKIIEDPAQSSGFHPSGSVVAVGTLTGRWFVFDT), 616–654 (DLVTVHTDGNEQLSVMRYSPDGNFLAIGSHDNCIYIYGV), 663–700 (RVGKCSGHSSFITHLDWSVNSQFLVSNSGDYEILYWVP), 708–767 (SVET…LFSY), and 774–813 (APSHIYSGHSSHVTNVDFLCEDSHLISTGGKDTSIMQWRV).

This sequence belongs to the WD repeat EMAP family. In terms of assembly, homotrimer; self-association is mediated by the N-terminal coiled coil. Does not interact with EML3. Binds repolymerizing microtubules. Binds unpolymerized tubulins via its WD repeat region. Interacts with TASOR.

It is found in the cytoplasm. The protein resides in the perinuclear region. Its subcellular location is the cytoskeleton. In terms of biological role, modulates the assembly and organization of the microtubule cytoskeleton, and probably plays a role in regulating the orientation of the mitotic spindle and the orientation of the plane of cell division. Required for normal proliferation of neuronal progenitor cells in the developing brain and for normal brain development. Does not affect neuron migration per se. This Rattus norvegicus (Rat) protein is Echinoderm microtubule-associated protein-like 1 (Eml1).